The following is a 72-amino-acid chain: Small ribosomal subunit protein bS18 (72 aa).

The protein belongs to the bacterial ribosomal protein bS18 family. Part of the 30S ribosomal subunit. Forms a tight heterodimer with protein bS6.

In terms of biological role, binds as a heterodimer with protein bS6 to the central domain of the 16S rRNA, where it helps stabilize the platform of the 30S subunit. This Trichodesmium erythraeum (strain IMS101) protein is Small ribosomal subunit protein bS18.